The chain runs to 516 residues: Nondiscriminating glutamyl-tRNA synthetase EARS2, mitochondrial (516 aa).

Residues 1–39 (MRPAFIRGKWLSRTLELATGLGRRTCSSRESGREVRVRF) constitute a mitochondrion transit peptide. Residue 38 to 40 (RFA) coordinates L-glutamate. The short motif at 43–51 (PTGFLHLGG) is the 'HIGH' region element. His48 is an ATP binding site. Residues Glu74, 226–230 (YHLAN), and Arg244 contribute to the L-glutamate site. Residues Glu247 and 282 to 286 (KLSKR) contribute to the ATP site. The short motif at 282-286 (KLSKR) is the 'KMSKS' region element.

This sequence belongs to the class-I aminoacyl-tRNA synthetase family. Glutamate--tRNA ligase type 1 subfamily.

It is found in the mitochondrion matrix. It catalyses the reaction tRNA(Glx) + L-glutamate + ATP = L-glutamyl-tRNA(Glx) + AMP + diphosphate. The catalysed reaction is tRNA(Glu) + L-glutamate + ATP = L-glutamyl-tRNA(Glu) + AMP + diphosphate. The enzyme catalyses tRNA(Gln) + L-glutamate + ATP = L-glutamyl-tRNA(Gln) + AMP + diphosphate. Non-discriminating glutamyl-tRNA synthetase that catalyzes aminoacylation of both mitochondrial tRNA(Glu) and tRNA(Gln) and participates in RNA aminoacylation for mitochondrial protein translation. Attachs glutamate to tRNA(Glu) or tRNA(Gln) in a two-step reaction: glutamate is first activated by ATP to form Glu-AMP and then transferred to the acceptor end of tRNA(Glu) or tRNA(Gln). This Xenopus tropicalis (Western clawed frog) protein is Nondiscriminating glutamyl-tRNA synthetase EARS2, mitochondrial.